The primary structure comprises 116 residues: QLANEPPIEIIRQESTDNGDGNFNFLFETANGIYKEVSGYPTANGAQAMTGSFRFPLDDGQIVEVSFTADENGYLPVSDFIPTPHPIPAHVLETLAIVDELVRQGATWDEQGRRIT.

Q1 is modified (pyrrolidone carboxylic acid). The disordered stretch occupies residues 1–22 (QLANEPPIEIIRQESTDNGDGN). One can recognise a Chitin-binding type R&amp;R domain in the interval 20-85 (DGNFNFLFET…PVSDFIPTPH (66 aa)). T83 is a glycosylation site (O-linked (HexNAc) threonine).

In terms of tissue distribution, arthrodial membrane.

The protein is Cuticle protein AM1274 of Cancer pagurus (Rock crab).